Here is a 351-residue protein sequence, read N- to C-terminus: Phenylalanine--tRNA ligase alpha subunit (351 aa).

Positions 45–69 (LGDDAPIPAARRSLGSLPKDQRKDA) are disordered. E269 is a Mg(2+) binding site.

This sequence belongs to the class-II aminoacyl-tRNA synthetase family. Phe-tRNA synthetase alpha subunit type 1 subfamily. Tetramer of two alpha and two beta subunits. Requires Mg(2+) as cofactor.

The protein resides in the cytoplasm. The catalysed reaction is tRNA(Phe) + L-phenylalanine + ATP = L-phenylalanyl-tRNA(Phe) + AMP + diphosphate + H(+). In Corynebacterium jeikeium (strain K411), this protein is Phenylalanine--tRNA ligase alpha subunit.